We begin with the raw amino-acid sequence, 1505 residues long: ABC transporter C family member 13 (1505 aa).

12 helical membrane-spanning segments follow: residues 11 to 31, 54 to 68, 71 to 91, 102 to 122, 131 to 151, 171 to 191, 313 to 333, 336 to 356, 367 to 387, 421 to 441, 447 to 467, and 534 to 554; these read EAAAAAAHAALLALALLLLLL, AVDGGLAAASSVGAW, AALACCGYALLAQVAALSYEV, ALLLPAVQALAWAALLALAMQ, FPVLVRVWWVVSFVLCVGIAY, MVANFASAPALGFLCLVGVMG, AFAAVNTIVSYVGPYLISYFV, LSGKIEFPHEGYILASVFFVA, WYLGVDVMGIHVKSGLTAMVY, AWYFHDIWMLPLQIILALAIL, IAMVSTLVATVLSIAASVPVA, and FVFWSSPIFVAVITFGTCILL. Positions 314 to 589 constitute an ABC transmembrane type-1 1 domain; the sequence is FAAVNTIVSY…FPDLISMIAQ (276 aa). Residues 623 to 846 enclose the ABC transporter 1 domain; the sequence is ININDATFSW…GTDFNALVCA (224 aa). Position 658 to 665 (658 to 665) interacts with ATP; that stretch reads GVIGSGKS. Residues 881-897 show a composition bias toward polar residues; it reads DNLKNKVSNNEKPSSTR. The segment at 881 to 919 is disordered; that stretch reads DNLKNKVSNNEKPSSTRGIKEKKKKPEERKKKRSVQEEE. Over residues 904 to 919 the composition is skewed to basic and acidic residues; it reads KKPEERKKKRSVQEEE. 6 helical membrane passes run 940–960, 980–1000, 1055–1077, 1081–1103, 1149–1169, and 1174–1194; these read GTLIPLIILAQTMFQVLQIAS, SVVLLVVYMSLAFGSSLFVFV, IAFRLGGFASTTIQLLGIVAVMS, WQVLILIVPMAVACMWMQRYYIA, LLDCFARPLFSSLAAIEWLCL, and LSTFVFAFCMAILVSFPPGTI. An ABC transmembrane type-1 2 domain is found at 945–1215; the sequence is LIILAQTMFQ…GLNLNARMSR (271 aa). One can recognise an ABC transporter 2 domain in the interval 1262 to 1496; that stretch reads IELVDLKVRY…KSSMFMQLVS (235 aa). 1296-1303 contributes to the ATP binding site; sequence GRTGSGKS.

This sequence belongs to the ABC transporter superfamily. ABCC family. Conjugate transporter (TC 3.A.1.208) subfamily.

The protein localises to the membrane. ABC transporter that may affect phytic acid transport and compartmentalization. May function directly or indirectly in removing phytic acid from the cytosol or in vesicle trafficking. Required for phytic acid accumulation in developing seeds. Phytic acid is the primary storage form of phosphorus in cereal grains and other plant seeds. The sequence is that of ABC transporter C family member 13 from Oryza sativa subsp. indica (Rice).